Here is a 225-residue protein sequence, read N- to C-terminus: NAD(P)H-quinone oxidoreductase subunit K, chloroplastic (225 aa).

Residues cysteine 43, cysteine 44, cysteine 108, and cysteine 139 each coordinate [4Fe-4S] cluster.

It belongs to the complex I 20 kDa subunit family. NDH is composed of at least 16 different subunits, 5 of which are encoded in the nucleus. Requires [4Fe-4S] cluster as cofactor.

It localises to the plastid. Its subcellular location is the chloroplast thylakoid membrane. The enzyme catalyses a plastoquinone + NADH + (n+1) H(+)(in) = a plastoquinol + NAD(+) + n H(+)(out). It catalyses the reaction a plastoquinone + NADPH + (n+1) H(+)(in) = a plastoquinol + NADP(+) + n H(+)(out). Its function is as follows. NDH shuttles electrons from NAD(P)H:plastoquinone, via FMN and iron-sulfur (Fe-S) centers, to quinones in the photosynthetic chain and possibly in a chloroplast respiratory chain. The immediate electron acceptor for the enzyme in this species is believed to be plastoquinone. Couples the redox reaction to proton translocation, and thus conserves the redox energy in a proton gradient. This Barbarea verna (Land cress) protein is NAD(P)H-quinone oxidoreductase subunit K, chloroplastic.